We begin with the raw amino-acid sequence, 375 residues long: Trichodiene synthase (375 aa).

The protein belongs to the trichodiene synthase family.

The catalysed reaction is (2E,6E)-farnesyl diphosphate = trichodiene + diphosphate. It participates in sesquiterpene biosynthesis; trichothecene biosynthesis. TS is a member of the terpene cyclase group of enzymes. It catalyzes the isomerization and cyclization of farnesyl pyro-phosphate to form trichodiene, the first cyclic intermediate in the biosynthetic pathway for trichothecenes. It serves to branch trichothecene biosynthesis from the isoprenoid pathway. The chain is Trichodiene synthase (TRI5) from Fusarium mesoamericanum.